A 428-amino-acid polypeptide reads, in one-letter code: Serine--tRNA ligase (428 aa).

235 to 237 (TAE) lines the L-serine pocket. 266–268 (RSE) is an ATP binding site. Glutamate 289 lines the L-serine pocket. 353–356 (EISS) is an ATP binding site. Residue serine 389 coordinates L-serine.

This sequence belongs to the class-II aminoacyl-tRNA synthetase family. Type-1 seryl-tRNA synthetase subfamily. In terms of assembly, homodimer. The tRNA molecule binds across the dimer.

The protein resides in the cytoplasm. It carries out the reaction tRNA(Ser) + L-serine + ATP = L-seryl-tRNA(Ser) + AMP + diphosphate + H(+). The enzyme catalyses tRNA(Sec) + L-serine + ATP = L-seryl-tRNA(Sec) + AMP + diphosphate + H(+). Its pathway is aminoacyl-tRNA biosynthesis; selenocysteinyl-tRNA(Sec) biosynthesis; L-seryl-tRNA(Sec) from L-serine and tRNA(Sec): step 1/1. Catalyzes the attachment of serine to tRNA(Ser). Is also able to aminoacylate tRNA(Sec) with serine, to form the misacylated tRNA L-seryl-tRNA(Sec), which will be further converted into selenocysteinyl-tRNA(Sec). This chain is Serine--tRNA ligase, found in Shewanella amazonensis (strain ATCC BAA-1098 / SB2B).